A 542-amino-acid chain; its full sequence is Mitogen-activated protein kinase 14 (542 aa).

Residues 13-304 (YKIEEVIGKG…AEEALADPYF (292 aa)) enclose the Protein kinase domain. Residues 19-27 (IGKGSYGVV) and Lys-42 each bind ATP. Residue Asp-139 is the Proton acceptor of the active site. The residue at position 175 (Thr-175) is a Phosphothreonine. The TXY signature appears at 175–177 (TDY). Tyr-177 bears the Phosphotyrosine mark. Disordered stretches follow at residues 388 to 412 (STAA…DNRP) and 482 to 542 (RNPA…SGHW). Residues 488 to 507 (PNSSVPLGSSYPRRNQTCKS) are compositionally biased toward polar residues.

It belongs to the protein kinase superfamily. CMGC Ser/Thr protein kinase family. MAP kinase subfamily. In terms of processing, dually phosphorylated on Thr-175 and Tyr-177, which activates the enzyme.

It carries out the reaction L-seryl-[protein] + ATP = O-phospho-L-seryl-[protein] + ADP + H(+). The catalysed reaction is L-threonyl-[protein] + ATP = O-phospho-L-threonyl-[protein] + ADP + H(+). Its activity is regulated as follows. Activated by threonine and tyrosine phosphorylation. The protein is Mitogen-activated protein kinase 14 (MPK14) of Oryza sativa subsp. japonica (Rice).